Here is a 158-residue protein sequence, read N- to C-terminus: Glycine/sarcosine/betaine reductase complex component A (158 aa).

The active site involves Sec44. Residue Sec44 is a non-standard amino acid, selenocysteine.

This sequence belongs to the GrdA family. In terms of assembly, monomer. Component of the glycine, sarcosine and betaine reductase complexes, together with components B and C.

It carries out the reaction acetyl phosphate + [thioredoxin]-disulfide + NH4(+) + H2O = [thioredoxin]-dithiol + glycine + phosphate + H(+). The enzyme catalyses acetyl phosphate + methylamine + [thioredoxin]-disulfide + H2O = sarcosine + [thioredoxin]-dithiol + phosphate + H(+). The catalysed reaction is acetyl phosphate + trimethylamine + [thioredoxin]-disulfide + H2O = glycine betaine + [thioredoxin]-dithiol + phosphate + H(+). Functionally, in the first step of glycine, betaine and sarcosine reductases, the substrate is bound to component PB via a Schiff base intermediate. Then the PB-activated substrate is nucleophilically attacked by the selenol anion of component PA to transform it to a carboxymethylated selenoether and the respective amine. By action of component PC, acetyl phosphate is formed, leaving component PA in its oxidized state. Finally component PA becomes reduced by the thioredoxin system to start a new catalytic cycle of reductive deamination. This is Glycine/sarcosine/betaine reductase complex component A from Clostridium botulinum (strain ATCC 19397 / Type A).